A 227-amino-acid polypeptide reads, in one-letter code: NADH-quinone oxidoreductase subunit C (227 aa).

Belongs to the complex I 30 kDa subunit family. In terms of assembly, NDH-1 is composed of 14 different subunits. Subunits NuoB, C, D, E, F, and G constitute the peripheral sector of the complex.

The protein localises to the cell inner membrane. It catalyses the reaction a quinone + NADH + 5 H(+)(in) = a quinol + NAD(+) + 4 H(+)(out). Functionally, NDH-1 shuttles electrons from NADH, via FMN and iron-sulfur (Fe-S) centers, to quinones in the respiratory chain. The immediate electron acceptor for the enzyme in this species is believed to be ubiquinone. Couples the redox reaction to proton translocation (for every two electrons transferred, four hydrogen ions are translocated across the cytoplasmic membrane), and thus conserves the redox energy in a proton gradient. In Legionella pneumophila (strain Corby), this protein is NADH-quinone oxidoreductase subunit C.